We begin with the raw amino-acid sequence, 431 residues long: MPNVVVVGAQWGDEGKGKIVDLLTEHADVVVRFQGGNNAGHTLVVNGEKTVLHLIPAGILHPGKSCVIGNGVVFDPEVFVMEVDRLKSRNALADDSQLVVSLDAHVIMPWHKAIDIAREQAMGAGKIGTTGRGIGPTYEDKVARRGLRIRDLLDAARLERKVKERLPAAREELSRLGATPELDEAAIVARYSELGRRVARYAADVSLWLHRALQNGKQLLFEGAQGTMLDVDHGTYPFVTSSNTVAGNAVVGCGLGPTAVDYVLGISKAYSTRVGGGPYPSELKDETGERLRKIGGEFGATTGRPRRTGWLDALALRYAARVNGLHGIAMTKLDVLAGFETVKIAVGYRVDGKVLDEMPSDPELLERAEAVYEELPGWTEKLEDLRSWDDLPPRARAYVKRVEQLVGVPVVGLSVGADRGQTILLENPFRA.

GTP-binding positions include Gly-12–Lys-18 and Gly-40–Thr-42. Residue Asp-13 is the Proton acceptor of the active site. Mg(2+)-binding residues include Asp-13 and Gly-40. IMP is bound by residues Asp-13–Lys-16, Asn-38–His-41, Thr-130, Arg-144, Gln-225, Thr-240, and Arg-304. His-41 serves as the catalytic Proton donor. Ala-300–Arg-306 provides a ligand contact to substrate. Residues Arg-306, Lys-332–Asp-334, and Ser-414–Gly-416 each bind GTP.

The protein belongs to the adenylosuccinate synthetase family. As to quaternary structure, homodimer. It depends on Mg(2+) as a cofactor.

The protein resides in the cytoplasm. It catalyses the reaction IMP + L-aspartate + GTP = N(6)-(1,2-dicarboxyethyl)-AMP + GDP + phosphate + 2 H(+). It participates in purine metabolism; AMP biosynthesis via de novo pathway; AMP from IMP: step 1/2. Functionally, plays an important role in the de novo pathway of purine nucleotide biosynthesis. Catalyzes the first committed step in the biosynthesis of AMP from IMP. In Anaeromyxobacter sp. (strain Fw109-5), this protein is Adenylosuccinate synthetase.